We begin with the raw amino-acid sequence, 211 residues long: Histidine biosynthesis bifunctional protein HisIE (211 aa).

A phosphoribosyl-AMP cyclohydrolase region spans residues 1 to 122 (MSVKAAEVSS…DPQEESQMVW (122 aa)). Positions 123–211 (LHQLEQLLAA…VINKLKERHK (89 aa)) are phosphoribosyl-ATP pyrophosphohydrolase.

In the N-terminal section; belongs to the PRA-CH family. The protein in the C-terminal section; belongs to the PRA-PH family.

It localises to the cytoplasm. It carries out the reaction 1-(5-phospho-beta-D-ribosyl)-ATP + H2O = 1-(5-phospho-beta-D-ribosyl)-5'-AMP + diphosphate + H(+). The enzyme catalyses 1-(5-phospho-beta-D-ribosyl)-5'-AMP + H2O = 1-(5-phospho-beta-D-ribosyl)-5-[(5-phospho-beta-D-ribosylamino)methylideneamino]imidazole-4-carboxamide. Its pathway is amino-acid biosynthesis; L-histidine biosynthesis; L-histidine from 5-phospho-alpha-D-ribose 1-diphosphate: step 2/9. It functions in the pathway amino-acid biosynthesis; L-histidine biosynthesis; L-histidine from 5-phospho-alpha-D-ribose 1-diphosphate: step 3/9. The sequence is that of Histidine biosynthesis bifunctional protein HisIE from Vibrio vulnificus (strain YJ016).